The primary structure comprises 288 residues: Diaminopimelate epimerase (288 aa).

2 residues coordinate substrate: N14 and N67. C76 functions as the Proton donor in the catalytic mechanism. Residues 77–78 (GN), N166, N199, and 217–218 (ER) each bind substrate. C226 (proton acceptor) is an active-site residue. 227–228 (GT) provides a ligand contact to substrate.

Belongs to the diaminopimelate epimerase family. In terms of assembly, homodimer.

Its subcellular location is the cytoplasm. The catalysed reaction is (2S,6S)-2,6-diaminopimelate = meso-2,6-diaminopimelate. Its pathway is amino-acid biosynthesis; L-lysine biosynthesis via DAP pathway; DL-2,6-diaminopimelate from LL-2,6-diaminopimelate: step 1/1. Its function is as follows. Catalyzes the stereoinversion of LL-2,6-diaminopimelate (L,L-DAP) to meso-diaminopimelate (meso-DAP), a precursor of L-lysine and an essential component of the bacterial peptidoglycan. This is Diaminopimelate epimerase from Bacillus cereus (strain AH820).